Reading from the N-terminus, the 137-residue chain is Large ribosomal subunit protein uL16 (137 aa).

Residues 1–17 are compositionally biased toward basic residues; the sequence is MLQPKRTKFRKQQKGRN. The segment at 1–24 is disordered; the sequence is MLQPKRTKFRKQQKGRNRGLAQSG.

It belongs to the universal ribosomal protein uL16 family. Part of the 50S ribosomal subunit.

Binds 23S rRNA and is also seen to make contacts with the A and possibly P site tRNAs. This chain is Large ribosomal subunit protein uL16, found in Dichelobacter nodosus (strain VCS1703A).